Consider the following 440-residue polypeptide: GTPase Obg (440 aa).

The Obg domain occupies serine 5–leucine 163. The 175-residue stretch at alanine 164–serine 338 folds into the OBG-type G domain. GTP-binding positions include glycine 170–serine 177, phenylalanine 195–lysine 199, aspartate 217–glycine 220, serine 288–aspartate 291, and serine 319–valine 321. Serine 177 and threonine 197 together coordinate Mg(2+). Residues tyrosine 362 to glutamine 440 enclose the OCT domain.

Belongs to the TRAFAC class OBG-HflX-like GTPase superfamily. OBG GTPase family. As to quaternary structure, monomer. Mg(2+) serves as cofactor.

The protein localises to the cytoplasm. Its function is as follows. An essential GTPase which binds GTP, GDP and possibly (p)ppGpp with moderate affinity, with high nucleotide exchange rates and a fairly low GTP hydrolysis rate. Plays a role in control of the cell cycle, stress response, ribosome biogenesis and in those bacteria that undergo differentiation, in morphogenesis control. The polypeptide is GTPase Obg (Lactobacillus delbrueckii subsp. bulgaricus (strain ATCC BAA-365 / Lb-18)).